Here is a 1838-residue protein sequence, read N- to C-terminus: Nuclear pore complex protein NUP205 (1838 aa).

This sequence belongs to the NUP186/NUP192/NUP205 family. As to quaternary structure, part of the nuclear pore complex (NPC). The NPC has an eight-fold symmetrical structure comprising a central transport channel and two rings, the cytoplasmic and nuclear rings, to which eight filaments are attached. The cytoplasmic filaments have loose ends, while the nuclear filaments are joined in a distal ring, forming a nuclear basket. NPCs are highly dynamic in configuration and composition, and can be devided in 3 subcomplexes, the NUP62 subcomplex, the NUP107-160 subcomplex and the NUP93 subcomplex, containing approximately 30 different nucleoporin proteins.

The protein resides in the nucleus envelope. It localises to the nucleus. It is found in the nuclear pore complex. This chain is Nuclear pore complex protein NUP205, found in Arabidopsis thaliana (Mouse-ear cress).